We begin with the raw amino-acid sequence, 279 residues long: D-aminoacyl-tRNA deacylase (279 aa).

The tract at residues 81–100 (GRKSLTVHHPGNPTEDNSLG) is disordered.

The protein belongs to the DtdA deacylase family. In terms of assembly, monomer. It depends on Zn(2+) as a cofactor.

The catalysed reaction is a D-aminoacyl-tRNA + H2O = a tRNA + a D-alpha-amino acid + H(+). It carries out the reaction glycyl-tRNA(Ala) + H2O = tRNA(Ala) + glycine + H(+). In terms of biological role, D-aminoacyl-tRNA deacylase with broad substrate specificity. By recycling D-aminoacyl-tRNA to D-amino acids and free tRNA molecules, this enzyme counteracts the toxicity associated with the formation of D-aminoacyl-tRNA entities in vivo. The chain is D-aminoacyl-tRNA deacylase from Aeropyrum pernix (strain ATCC 700893 / DSM 11879 / JCM 9820 / NBRC 100138 / K1).